Reading from the N-terminus, the 528-residue chain is UDP-glucuronosyltransferase 1A9 (528 aa).

A signal peptide spans M1–A23. Residue N69 is glycosylated (N-linked (GlcNAc...) asparagine). Residue K97 is modified to N6-succinyllysine. N-linked (GlcNAc...) asparagine glycosylation is found at N290 and N428. The chain crosses the membrane as a helical span at residues V486 to A506.

Belongs to the UDP-glycosyltransferase family. As to quaternary structure, homodimer. Homooligomer. Interacts with UGT1A1, UGT1A3, UGT1A4, UGT1A6, UGT1A7, UGT1A8 and UGT1A10 to form heterodimers. As to expression, highly expressed in liver and at lower levels in stomach and kidney.

Its subcellular location is the endoplasmic reticulum membrane. It carries out the reaction glucuronate acceptor + UDP-alpha-D-glucuronate = acceptor beta-D-glucuronoside + UDP + H(+). The enzyme catalyses 2-hydroxy-17beta-estradiol + UDP-alpha-D-glucuronate = 2-hydroxy-17beta-estradiol 3-O-(beta-D-glucuronate) + UDP + H(+). The catalysed reaction is 4-hydroxy-17beta-estradiol + UDP-alpha-D-glucuronate = 17beta-estradiol 4-O-(beta-D-glucuronate) + UDP + H(+). It catalyses the reaction 2-hydroxyestrone + UDP-alpha-D-glucuronate = 2-hydroxyestrone 3-O-(beta-D-glucuronate) + UDP + H(+). It carries out the reaction 4-hydroxyestrone + UDP-alpha-D-glucuronate = estrone 4-O-(beta-D-glucuronate) + UDP + H(+). The enzyme catalyses prunetin + UDP-alpha-D-glucuronate = prunetin-5-O-beta-D-glucuronide + UDP. The catalysed reaction is 8-iso-prostaglandin F2alpha + UDP-alpha-D-glucuronate = 8-iso-prostaglandin F2alpha-glucuronide + UDP + H(+). It catalyses the reaction 5-epi-5-F2t-IsoP + UDP-alpha-D-glucuronate = 5-epi-5-F2t-IsoP-glucuronide + UDP + H(+). It carries out the reaction (5Z,8Z,11Z,14Z)-eicosatetraenoate + UDP-alpha-D-glucuronate = O-[(5Z),(8Z),(11Z),(14Z)-eicosatetraenoyl]-beta-D-glucuronate + UDP. The enzyme catalyses 15-hydroxy-(5Z,8Z,11Z,13E)-eicosatetraenoate + UDP-alpha-D-glucuronate = 15-O-(beta-D-glucuronosyl)-(5Z,8Z,11Z,14Z)-eicosatetraenoate + UDP + H(+). The catalysed reaction is prostaglandin B1 + UDP-alpha-D-glucuronate = 15-O-(beta-D-glucuronosyl)-prostaglandin B1 + UDP + H(+). It catalyses the reaction (E)-ferulate + UDP-alpha-D-glucuronate = (E)-4-O-(beta-D-glucuronosyl)-ferulate + UDP + H(+). It carries out the reaction (E)-ferulate + UDP-alpha-D-glucuronate = (E)-ferulic acid beta-D-glucuronate ester + UDP. The enzyme catalyses candesartan + UDP-alpha-D-glucuronate = candesartan O-beta-D-glucuronoside + UDP. The catalysed reaction is SN-38 + UDP-alpha-D-glucuronate = SN-38 O-beta-D-glucuronide + UDP + H(+). It catalyses the reaction mycophenolate + UDP-alpha-D-glucuronate = mycophenolate 7-O-beta-D-glucuronide + UDP + H(+). Its function is as follows. UDP-glucuronosyltransferase (UGT) that catalyzes phase II biotransformation reactions in which lipophilic substrates are conjugated with glucuronic acid to increase the metabolite's water solubility, thereby facilitating excretion into either the urine or bile. Essential for the elimination and detoxification of drugs, xenobiotics and endogenous compounds. Catalyzes the glucuronidation of endogenous estrogen hormones such as estradiol and estrone. Involved in the glucuronidation of arachidonic acid (AA) and AA-derived eicosanoids including 15-HETE, PGB1 and F2-isoprostanes (8-iso-PGF2alpha and 5-epi-5-F2t-IsoP). Glucuronates the phytochemical ferulic acid efficently at both the phenolic or the carboxylic acid group. Also catalyzes the glucuronidation of the isoflavones genistein, daidzein, glycitein, formononetin, biochanin A and prunetin, which are phytoestrogens with anticancer and cardiovascular properties. Involved in the glucuronidation of the AGTR1 angiotensin receptor antagonist caderastan, a drug which can inhibit the effect of angiotensin II. Involved in the biotransformation of 7-ethyl-10-hydroxycamptothecin (SN-38), the pharmacologically active metabolite of the anticancer drug irinotecan. Also metabolizes mycophenolate, an immunosuppressive agent. This chain is UDP-glucuronosyltransferase 1A9, found in Mus musculus (Mouse).